Reading from the N-terminus, the 96-residue chain is UPF0251 protein Spea_3639 (96 aa).

Belongs to the UPF0251 family.

The chain is UPF0251 protein Spea_3639 from Shewanella pealeana (strain ATCC 700345 / ANG-SQ1).